A 423-amino-acid chain; its full sequence is Phytoene synthase, chloroplastic (423 aa).

A chloroplast-targeting transit peptide spans 1-136 (MVVAILRVVS…DAYDRCGEVC (136 aa)).

Belongs to the phytoene/squalene synthase family. In terms of assembly, monomer.

It is found in the plastid. The protein resides in the chloroplast. It carries out the reaction 2 (2E,6E,10E)-geranylgeranyl diphosphate = 15-cis-phytoene + 2 diphosphate. The protein operates within carotenoid biosynthesis; phytoene biosynthesis; all-trans-phytoene from geranylgeranyl diphosphate: step 1/1. Catalyzes the reaction from prephytoene diphosphate to phytoene. In Narcissus pseudonarcissus (Daffodil), this protein is Phytoene synthase, chloroplastic (PSY).